The primary structure comprises 31 residues: Cyclotide psybry C (31 aa).

A cross-link (cyclopeptide (Gly-Asn)) is located at residues 1 to 31 (GFNPCGETCQIDQTCHAPGCTCSIANICVRN). 3 disulfides stabilise this stretch: cysteine 5–cysteine 20, cysteine 9–cysteine 22, and cysteine 15–cysteine 28.

In terms of processing, this is a cyclic peptide.

In terms of biological role, probably participates in a plant defense mechanism. The polypeptide is Cyclotide psybry C (Psychotria brachyceras).